The following is a 262-amino-acid chain: MTGINAMAPAPEVVSWAEAVEQDNAPHIQEGADGTRTETAFTEVDGVRWKVVTQFKVINKRVPKVVADRKKWVKFGSCKGEPAGPQVATTYVAEEVDMQFTRNRAGEQILDVQEDKQTAKTTSREHCRHCKGNDHWSTHCPYKVMYQLDEEADADKDTEKDRMAMGMRPDGRQIDRNRSDENTCRVTNLPQEMNEDELRDLFGKIGRVIRIFIARDKVTGLPKGFAFVTFESRDDAARAIAELNDIRMYHMVLKVEWTRPSN.

The 79-residue stretch at 182–260 (NTCRVTNLPQ…MVLKVEWTRP (79 aa)) folds into the RRM domain.

The protein belongs to the eIF-3 subunit G family. As to quaternary structure, component of the eukaryotic translation initiation factor 3 (eIF-3) complex.

Its subcellular location is the cytoplasm. Its function is as follows. RNA-binding component of the eukaryotic translation initiation factor 3 (eIF-3) complex, which is involved in protein synthesis of a specialized repertoire of mRNAs and, together with other initiation factors, stimulates binding of mRNA and methionyl-tRNAi to the 40S ribosome. The eIF-3 complex specifically targets and initiates translation of a subset of mRNAs involved in cell proliferation. This subunit can bind 18S rRNA. Binds to GC-rich 5'UTRs in cholinergic motor neurons, thereby may play a role in translational regulation of mRNAs involved in neuropeptide signaling and stress response, including hlh-30 isoform d and ncs-2. This Caenorhabditis elegans protein is Eukaryotic translation initiation factor 3 subunit G.